Here is an 806-residue protein sequence, read N- to C-terminus: Mitochondrial intermediate peptidase (806 aa).

A mitochondrion-targeting transit peptide spans 1 to 29 (MLSRHLTVLRSACRVSHDLRVPSTQAVRK). H581 contributes to the Zn(2+) binding site. The active site involves E582. H585 and H588 together coordinate Zn(2+).

This sequence belongs to the peptidase M3 family. Zn(2+) is required as a cofactor.

The protein resides in the mitochondrion matrix. The catalysed reaction is Release of an N-terminal octapeptide as second stage of processing of some proteins imported into the mitochondrion.. Cleaves proteins, imported into the mitochondrion, to their mature size. While most mitochondrial precursor proteins are processed to the mature form in one step by mitochondrial processing peptidase (MPP), the sequential cleavage by MIP of an octapeptide after initial processing by MPP is a required step for a subgroup of nuclear-encoded precursor proteins destined for the matrix or the inner membrane. This is Mitochondrial intermediate peptidase (OCT1) from Malassezia globosa (strain ATCC MYA-4612 / CBS 7966) (Dandruff-associated fungus).